The sequence spans 521 residues: Cytochrome P450 monooxygenase bet2 (521 aa).

The helical transmembrane segment at 23–43 (SNWRFALFVAATLLTSYIVIV) threads the bilayer. N-linked (GlcNAc...) asparagine glycosylation occurs at Asn-188. Cys-461 contributes to the heme binding site.

It belongs to the cytochrome P450 family. Heme is required as a cofactor.

Its subcellular location is the membrane. The enzyme catalyses dehydroprobetaenone I + NADPH + O2 + H(+) = epoxybetaenone + NADP(+) + H2O. It carries out the reaction dehydroprobetaenone I + 3 NADPH + 3 O2 + 3 H(+) = betaenone C + 3 NADP(+) + 3 H2O. It participates in mycotoxin biosynthesis. Functionally, cytochrome P450 monooxygenase; part of the gene cluster that mediates the biosynthesis of betaenones, phytotoxic polyketides involved in leaf spot disease in sugar beets. The first step of the pathway is the synthesis of dehydroprobetaenone I by the polyketide synthase bet1 and the enoyl reductase bet3 via condensation of one acetyl-CoA starter unit with 7 malonyl-CoA units and 5 methylations. The C-terminal reductase (R) domain of bet1 catalyzes the reductive release of the polyketide chain. Because bet1 lacks a designated enoylreductase (ER) domain, the required activity is provided the enoyl reductase bet3. The short-chain dehydrogenase/reductase bet4 then catalyzes reduction of dehydroprobetaenone I to probetaenone I. The cytochrome P450 monooxygenase bet2 catalyzes successive epoxidation, oxidation (resulting from epoxide opening) and hydroxylation to install a tertiary alcohol in the decaline ring to yield betaenone C from dehydroprobetaenone I and betaenone B from probetaenone I. The FAD-linked oxidoreductase (orf1) is probably responsible for the conversion of betaenone C to betaenone A via an intramolecular aldol reaction between C-1 and C-17 to form the bridged tricyclic system in betaenone A. In Neocamarosporium betae (Beet black rot fungus), this protein is Cytochrome P450 monooxygenase bet2.